The primary structure comprises 340 residues: Aldose 1-epimerase (340 aa).

R77 contributes to the substrate binding site. H172 functions as the Proton donor in the catalytic mechanism. Residue D243 participates in substrate binding. E305 serves as the catalytic Proton acceptor.

This sequence belongs to the aldose epimerase family.

Its subcellular location is the cytoplasm. It catalyses the reaction alpha-D-glucose = beta-D-glucose. It participates in carbohydrate metabolism; hexose metabolism. Functionally, mutarotase converts alpha-aldose to the beta-anomer. It is active on D-glucose, L-arabinose, D-xylose, D-galactose, maltose and lactose. The sequence is that of Aldose 1-epimerase (galM) from Haemophilus influenzae (strain ATCC 51907 / DSM 11121 / KW20 / Rd).